Consider the following 394-residue polypeptide: UPF0284 protein SYNW1869 (394 aa).

The protein belongs to the UPF0284 family.

This Parasynechococcus marenigrum (strain WH8102) protein is UPF0284 protein SYNW1869.